The sequence spans 61 residues: Sperm protamine P1 (61 aa).

The interval 1–61 is disordered; it reads MARYRHSRSR…RRYSRRRRRY (61 aa).

It belongs to the protamine P1 family. As to expression, testis.

The protein resides in the nucleus. It localises to the chromosome. Protamines substitute for histones in the chromatin of sperm during the haploid phase of spermatogenesis. They compact sperm DNA into a highly condensed, stable and inactive complex. The sequence is that of Sperm protamine P1 (PRM1) from Potorous longipes (Long-footed potoroo).